A 311-amino-acid polypeptide reads, in one-letter code: Lipoyl synthase (311 aa).

Cysteine 47, cysteine 52, cysteine 58, cysteine 73, cysteine 77, cysteine 80, and serine 287 together coordinate [4Fe-4S] cluster. The Radical SAM core domain occupies 59-276 (WTKKHATVMI…AQIARAKGFL (218 aa)).

Belongs to the radical SAM superfamily. Lipoyl synthase family. Requires [4Fe-4S] cluster as cofactor.

The protein resides in the cytoplasm. It catalyses the reaction [[Fe-S] cluster scaffold protein carrying a second [4Fe-4S](2+) cluster] + N(6)-octanoyl-L-lysyl-[protein] + 2 oxidized [2Fe-2S]-[ferredoxin] + 2 S-adenosyl-L-methionine + 4 H(+) = [[Fe-S] cluster scaffold protein] + N(6)-[(R)-dihydrolipoyl]-L-lysyl-[protein] + 4 Fe(3+) + 2 hydrogen sulfide + 2 5'-deoxyadenosine + 2 L-methionine + 2 reduced [2Fe-2S]-[ferredoxin]. Its pathway is protein modification; protein lipoylation via endogenous pathway; protein N(6)-(lipoyl)lysine from octanoyl-[acyl-carrier-protein]: step 2/2. Catalyzes the radical-mediated insertion of two sulfur atoms into the C-6 and C-8 positions of the octanoyl moiety bound to the lipoyl domains of lipoate-dependent enzymes, thereby converting the octanoylated domains into lipoylated derivatives. The sequence is that of Lipoyl synthase from Sphingopyxis alaskensis (strain DSM 13593 / LMG 18877 / RB2256) (Sphingomonas alaskensis).